The primary structure comprises 285 residues: 2-dehydro-3-deoxyphosphooctonate aldolase (285 aa).

It belongs to the KdsA family.

It is found in the cytoplasm. The catalysed reaction is D-arabinose 5-phosphate + phosphoenolpyruvate + H2O = 3-deoxy-alpha-D-manno-2-octulosonate-8-phosphate + phosphate. It participates in carbohydrate biosynthesis; 3-deoxy-D-manno-octulosonate biosynthesis; 3-deoxy-D-manno-octulosonate from D-ribulose 5-phosphate: step 2/3. Its pathway is bacterial outer membrane biogenesis; lipopolysaccharide biosynthesis. This is 2-dehydro-3-deoxyphosphooctonate aldolase from Bordetella bronchiseptica (strain ATCC BAA-588 / NCTC 13252 / RB50) (Alcaligenes bronchisepticus).